We begin with the raw amino-acid sequence, 141 residues long: Large ribosomal subunit protein uL11 (141 aa).

The protein belongs to the universal ribosomal protein uL11 family. Part of the ribosomal stalk of the 50S ribosomal subunit. Interacts with L10 and the large rRNA to form the base of the stalk. L10 forms an elongated spine to which L12 dimers bind in a sequential fashion forming a multimeric L10(L12)X complex. In terms of processing, one or more lysine residues are methylated.

Functionally, forms part of the ribosomal stalk which helps the ribosome interact with GTP-bound translation factors. This is Large ribosomal subunit protein uL11 from Helicobacter acinonychis (strain Sheeba).